Here is a 160-residue protein sequence, read N- to C-terminus: Transcription elongation factor GreA (160 aa).

This sequence belongs to the GreA/GreB family.

In terms of biological role, necessary for efficient RNA polymerase transcription elongation past template-encoded arresting sites. The arresting sites in DNA have the property of trapping a certain fraction of elongating RNA polymerases that pass through, resulting in locked ternary complexes. Cleavage of the nascent transcript by cleavage factors such as GreA or GreB allows the resumption of elongation from the new 3'terminus. GreA releases sequences of 2 to 3 nucleotides. This Francisella philomiragia subsp. philomiragia (strain ATCC 25017 / CCUG 19701 / FSC 153 / O#319-036) protein is Transcription elongation factor GreA.